A 914-amino-acid polypeptide reads, in one-letter code: Probable UDP-N-acetylglucosamine--peptide N-acetylglucosaminyltransferase SPINDLY (914 aa).

A disordered region spans residues 1 to 39; sequence MVGLEDDTERERSPVVENGFSNGSRSSSSSAGVLSPSRK. Over residues 19–37 the composition is skewed to low complexity; the sequence is GFSNGSRSSSSSAGVLSPS. S35 carries the phosphoserine modification. TPR repeat units follow at residues 43 to 76, 77 to 110, 112 to 144, 152 to 185, 186 to 219, 220 to 253, 261 to 294, 295 to 328, 329 to 362, 364 to 396, and 397 to 430; these read GNDT…DSKN, VEAH…DPHN, CALT…DASY, AIVL…DPHY, APAY…RPMY, AEAY…SPNF, AIAL…NWHY, ADAM…NPHC, AEAC…KPNF, QSLN…NPTY, and AEAF…DPDS. Positions 431–914 are catalytic region; that stretch reads RNAGQNRLLA…QLSKRMDSTS (484 aa). The tract at residues 866–914 is disordered; it reads PLISKDLGPSRVSVTGEATPSLKANGSAPVPSSLPTQSPQLSKRMDSTS. The span at 877 to 889 shows a compositional bias: polar residues; it reads VSVTGEATPSLKA. Residues 894–907 show a composition bias toward low complexity; the sequence is PVPSSLPTQSPQLS.

This sequence belongs to the glycosyltransferase 41 family. O-GlcNAc transferase subfamily. Homomultimer; via its TPR repeats. Interacts with GI. Interacts with TCP14 and TCP15. Interacts (via N-terminus) with APRR5. Interacts with CPN20. As to expression, widely expressed. Present throughout the plant (at protein level).

Its subcellular location is the cytoplasm. It is found in the nucleus. It carries out the reaction L-seryl-[protein] + UDP-N-acetyl-alpha-D-glucosamine = 3-O-(N-acetyl-beta-D-glucosaminyl)-L-seryl-[protein] + UDP + H(+). It catalyses the reaction L-threonyl-[protein] + UDP-N-acetyl-alpha-D-glucosamine = 3-O-(N-acetyl-beta-D-glucosaminyl)-L-threonyl-[protein] + UDP + H(+). The catalysed reaction is L-seryl-[protein] + GDP-beta-L-fucose = 3-O-(alpha-L-fucosyl)-L-seryl-[protein] + GDP + H(+). The enzyme catalyses L-threonyl-[protein] + GDP-beta-L-fucose = 3-O-(alpha-L-fucosyl)-L-threonyl-[protein] + GDP + H(+). Its pathway is protein modification; protein glycosylation. Probable O-linked N-acetylglucosamine transferase (OGT) involved in various processes such as gibberellin (GA) signaling pathway and circadian clock. OGTs catalyze the addition of nucleotide-activated sugars directly onto the polypeptide through O-glycosidic linkage with the hydroxyl of serine or threonine. Probably acts by adding O-linked sugars to yet unknown proteins. Acts as a repressor of GA signaling pathway to inhibit hypocotyl elongation. Functions with GIGANTEA (GI) in pathways controlling flowering, circadian cotyledon movements and hypocotyl elongation. Acts as a light-regulated promoter of elongation via its interaction with GI. Acts as an activator of cytokinin signaling. Required with SEC for gamete and seed development. Its OGT activity has been proved in vitro but not in vivo. Possesses O-fucosyltransferase activity on specific serine and threonine residues. Mediates O-fucosylation of the DELLA protein RGA, a repressor of the GA signaling pathway. O-fucosylation enhances RGA activity by promoting RGA binding to key transcription factors in brassinosteroid and light-signaling pathways. Regulates root hair patterning upstream of the transcription factor WER, independently of DELLA proteins and GA signaling. Involved in abscisic acid (ABA) signaling partly through functional ABAR. Mediates O-fucosylation of CPN20 that may depress ABA responses during seed germination and seedling development. Involved in the modulation of the pace of the circadian clock by mediating O-fucosylation of APRR5, one of the core circadian clock components. O-fucosylation promotes APRR5 proteolysis. The chain is Probable UDP-N-acetylglucosamine--peptide N-acetylglucosaminyltransferase SPINDLY from Arabidopsis thaliana (Mouse-ear cress).